The primary structure comprises 548 residues: Chaperonin GroEL (548 aa).

ATP-binding positions include 29–32, K50, 86–90, G414, 478–480, and D494; these read TMGP, DGTTT, and NAA.

It belongs to the chaperonin (HSP60) family. Forms a cylinder of 14 subunits composed of two heptameric rings stacked back-to-back. Interacts with the co-chaperonin GroES.

The protein localises to the cytoplasm. The catalysed reaction is ATP + H2O + a folded polypeptide = ADP + phosphate + an unfolded polypeptide.. In terms of biological role, together with its co-chaperonin GroES, plays an essential role in assisting protein folding. The GroEL-GroES system forms a nano-cage that allows encapsulation of the non-native substrate proteins and provides a physical environment optimized to promote and accelerate protein folding. Its function is as follows. May play a protective role against the defense mechanisms generated by the infected macrophages. This Legionella pneumophila protein is Chaperonin GroEL.